The following is a 101-amino-acid chain: Integration host factor subunit beta (101 aa).

Residues 57-76 (PARAGRNPRTGEHVPVDQKS) form a disordered region.

Belongs to the bacterial histone-like protein family. Heterodimer of an alpha and a beta chain.

In terms of biological role, this protein is one of the two subunits of integration host factor, a specific DNA-binding protein that functions in genetic recombination as well as in transcriptional and translational control. This Nitrobacter winogradskyi (strain ATCC 25391 / DSM 10237 / CIP 104748 / NCIMB 11846 / Nb-255) protein is Integration host factor subunit beta.